A 560-amino-acid polypeptide reads, in one-letter code: Formate--tetrahydrofolate ligase (560 aa).

69 to 76 is an ATP binding site; that stretch reads TPAGEGKS.

The protein belongs to the formate--tetrahydrofolate ligase family.

The catalysed reaction is (6S)-5,6,7,8-tetrahydrofolate + formate + ATP = (6R)-10-formyltetrahydrofolate + ADP + phosphate. It functions in the pathway one-carbon metabolism; tetrahydrofolate interconversion. This Bacillus pumilus (strain SAFR-032) protein is Formate--tetrahydrofolate ligase.